The primary structure comprises 449 residues: Trigger factor (449 aa).

Residues 169–254 (GDRITVDFVG…AKQVEAPGEL (86 aa)) form the PPIase FKBP-type domain.

The protein belongs to the FKBP-type PPIase family. Tig subfamily.

It localises to the cytoplasm. The enzyme catalyses [protein]-peptidylproline (omega=180) = [protein]-peptidylproline (omega=0). Involved in protein export. Acts as a chaperone by maintaining the newly synthesized protein in an open conformation. Functions as a peptidyl-prolyl cis-trans isomerase. In Azorhizobium caulinodans (strain ATCC 43989 / DSM 5975 / JCM 20966 / LMG 6465 / NBRC 14845 / NCIMB 13405 / ORS 571), this protein is Trigger factor.